A 275-amino-acid polypeptide reads, in one-letter code: Diaminopimelate epimerase (275 aa).

N12, Q45, and N65 together coordinate substrate. The active-site Proton donor is the C74. Residues 75-76 (GN), N158, N191, and 209-210 (ER) contribute to the substrate site. C218 functions as the Proton acceptor in the catalytic mechanism. 219-220 (GT) provides a ligand contact to substrate.

The protein belongs to the diaminopimelate epimerase family. As to quaternary structure, homodimer.

The protein localises to the cytoplasm. It catalyses the reaction (2S,6S)-2,6-diaminopimelate = meso-2,6-diaminopimelate. It functions in the pathway amino-acid biosynthesis; L-lysine biosynthesis via DAP pathway; DL-2,6-diaminopimelate from LL-2,6-diaminopimelate: step 1/1. In terms of biological role, catalyzes the stereoinversion of LL-2,6-diaminopimelate (L,L-DAP) to meso-diaminopimelate (meso-DAP), a precursor of L-lysine and an essential component of the bacterial peptidoglycan. The chain is Diaminopimelate epimerase from Shewanella denitrificans (strain OS217 / ATCC BAA-1090 / DSM 15013).